We begin with the raw amino-acid sequence, 568 residues long: Urease subunit alpha (568 aa).

Residues His134, His136, and Lys217 each coordinate Ni(2+). Lys217 carries the post-translational modification N6-carboxylysine. His219 is a substrate binding site. His246 and His272 together coordinate Ni(2+). Residue His320 is the Proton donor of the active site. Asp360 is a binding site for Ni(2+).

It belongs to the metallo-dependent hydrolases superfamily. Urease alpha subunit family. In terms of assembly, heterotrimer of UreA (gamma), UreB (beta) and UreC (alpha) subunits. Three heterotrimers associate to form the active enzyme. Ni cation serves as cofactor. Carboxylation allows a single lysine to coordinate two nickel ions.

Its subcellular location is the cytoplasm. It carries out the reaction urea + 2 H2O + H(+) = hydrogencarbonate + 2 NH4(+). It participates in nitrogen metabolism; urea degradation; CO(2) and NH(3) from urea (urease route): step 1/1. This is Urease subunit alpha from Marinomonas sp. (strain MWYL1).